The sequence spans 644 residues: Exoribonuclease 2 (644 aa).

Residues 189–516 (REDLTALDFV…NHRLLKAVIK (328 aa)) form the RNB domain. The S1 motif domain maps to 561-643 (DTRFAAEIVD…ETRSIIARPV (83 aa)).

The protein belongs to the RNR ribonuclease family. RNase II subfamily.

It localises to the cytoplasm. The catalysed reaction is Exonucleolytic cleavage in the 3'- to 5'-direction to yield nucleoside 5'-phosphates.. Functionally, involved in mRNA degradation. Hydrolyzes single-stranded polyribonucleotides processively in the 3' to 5' direction. The chain is Exoribonuclease 2 from Escherichia coli O17:K52:H18 (strain UMN026 / ExPEC).